Here is a 194-residue protein sequence, read N- to C-terminus: 7-methyl-GTP pyrophosphatase (194 aa).

Catalysis depends on Asp67, which acts as the Proton acceptor.

This sequence belongs to the Maf family. YceF subfamily. Requires a divalent metal cation as cofactor.

The protein localises to the cytoplasm. The catalysed reaction is N(7)-methyl-GTP + H2O = N(7)-methyl-GMP + diphosphate + H(+). Nucleoside triphosphate pyrophosphatase that hydrolyzes 7-methyl-GTP (m(7)GTP). May have a dual role in cell division arrest and in preventing the incorporation of modified nucleotides into cellular nucleic acids. In Pseudoalteromonas atlantica (strain T6c / ATCC BAA-1087), this protein is 7-methyl-GTP pyrophosphatase.